The sequence spans 678 residues: ABC transporter G family member 13 (678 aa).

The ABC transporter domain maps to 10-254; sequence VAWEDLTVVI…FGEAGFPCPS (245 aa). 48–55 serves as a coordination point for ATP; sequence GPSGSGKS. Residues 355 to 567 form the ABC transmembrane type-2 domain; sequence KQLRILTQRS…ALQGAYKNEM (213 aa). Transmembrane regions (helical) follow at residues 374 to 394, 409 to 429, 446 to 466, 490 to 510, 513 to 533, and 602 to 622; these read YYWMRIAVYIVLSICVGSIFF, CGGFMAGFMTFMSIGGFQSFI, VAVYTVSNLLSSLPFIILMCL, LDLICAITTVESCMMMIASVV, FLMGVMLGAGYIGIMVLSAGF, and LDLAVVMMILIGYRIAFFAIL. Position 658 is a phosphoserine (serine 658).

It belongs to the ABC transporter superfamily. ABCG family. Eye pigment precursor importer (TC 3.A.1.204) subfamily.

Its subcellular location is the membrane. The protein is ABC transporter G family member 13 (ABCG13) of Arabidopsis thaliana (Mouse-ear cress).